A 449-amino-acid polypeptide reads, in one-letter code: Elongation factor 1-alpha (449 aa).

A tr-type G domain is found at 5-230 (KVHMNLVVVG…DMLEPPVRPS (226 aa)). Residues 14–21 (GHVDAGKS) are G1. Position 14–21 (14–21 (GHVDAGKS)) interacts with GTP. The G2 stretch occupies residues 70 to 74 (GITID). The tract at residues 91-94 (DAPG) is G3. Residues 91 to 95 (DAPGH) and 153 to 156 (NKMD) contribute to the GTP site. Residues 153 to 156 (NKMD) are G4. The tract at residues 194–196 (SGW) is G5. A 5-glutamyl glycerylphosphorylethanolamine modification is found at E362.

This sequence belongs to the TRAFAC class translation factor GTPase superfamily. Classic translation factor GTPase family. EF-Tu/EF-1A subfamily. In terms of processing, phosphatidylethanolamine (PE) is a direct precursor of the ethanolamine-phosphoglycerol (EPG) moiety.

The protein resides in the cytoplasm. Functionally, this protein promotes the GTP-dependent binding of aminoacyl-tRNA to the A-site of ribosomes during protein biosynthesis. In Trypanosoma brucei brucei, this protein is Elongation factor 1-alpha (TEF1).